The primary structure comprises 604 residues: Probable translation initiation factor IF-2 (604 aa).

Positions 18 to 232 (IRTPIVCVLG…VLIGLAQRYM (215 aa)) constitute a tr-type G domain. Residues 27–34 (GHVDHGKT) form a G1 region. 27–34 (GHVDHGKT) serves as a coordination point for GTP. The G2 stretch occupies residues 52 to 56 (AITQH). The segment at 88–91 (DTPG) is G3. GTP is bound by residues 88–92 (DTPGH) and 142–145 (TKLD). The segment at 142 to 145 (TKLD) is G4. The tract at residues 210-212 (SAH) is G5.

This sequence belongs to the TRAFAC class translation factor GTPase superfamily. Classic translation factor GTPase family. IF-2 subfamily.

Its function is as follows. Function in general translation initiation by promoting the binding of the formylmethionine-tRNA to ribosomes. Seems to function along with eIF-2. The polypeptide is Probable translation initiation factor IF-2 (Methanospirillum hungatei JF-1 (strain ATCC 27890 / DSM 864 / NBRC 100397 / JF-1)).